A 507-amino-acid chain; its full sequence is ATP synthase subunit alpha, chloroplastic (507 aa).

Gly170–Thr177 contacts ATP. Ser383 is modified (phosphoserine).

The protein belongs to the ATPase alpha/beta chains family. F-type ATPases have 2 components, CF(1) - the catalytic core - and CF(0) - the membrane proton channel. CF(1) has five subunits: alpha(3), beta(3), gamma(1), delta(1), epsilon(1). CF(0) has four main subunits: a, b, b' and c. In terms of processing, only phosphorylated in mesophyll cells, and only when cells are grown under high rather than low light regimes (70 vs 900 umol photons/m-2/s).

The protein localises to the plastid. Its subcellular location is the chloroplast thylakoid membrane. It carries out the reaction ATP + H2O + 4 H(+)(in) = ADP + phosphate + 5 H(+)(out). Produces ATP from ADP in the presence of a proton gradient across the membrane. The alpha chain is a regulatory subunit. This chain is ATP synthase subunit alpha, chloroplastic, found in Zea mays (Maize).